Here is a 137-residue protein sequence, read N- to C-terminus: Large ribosomal subunit protein uL24 (137 aa).

It belongs to the universal ribosomal protein uL24 family. As to quaternary structure, part of the 50S ribosomal subunit.

In terms of biological role, one of two assembly initiator proteins, it binds directly to the 5'-end of the 23S rRNA, where it nucleates assembly of the 50S subunit. Located at the polypeptide exit tunnel on the outside of the subunit. This Sulfurisphaera tokodaii (strain DSM 16993 / JCM 10545 / NBRC 100140 / 7) (Sulfolobus tokodaii) protein is Large ribosomal subunit protein uL24.